Here is a 133-residue protein sequence, read N- to C-terminus: Fatty acid-binding protein, heart (133 aa).

Alanine 2 is modified (N-acetylalanine). Threonine 8 bears the Phosphothreonine mark. Tyrosine 20 bears the Phosphotyrosine; by Tyr-kinases mark. Residue serine 23 is modified to Phosphoserine. Residue threonine 30 is modified to Phosphothreonine. Serine 83 carries the post-translational modification Phosphoserine. 127 to 129 (RTY) serves as a coordination point for (9Z)-octadecenoate. Hexadecanoate is bound at residue 127–129 (RTY). 127-129 (RTY) is a binding site for octadecanoate.

Belongs to the calycin superfamily. Fatty-acid binding protein (FABP) family.

It is found in the cytoplasm. Functionally, FABPs are thought to play a role in the intracellular transport of long-chain fatty acids and their acyl-CoA esters. This Mus musculus (Mouse) protein is Fatty acid-binding protein, heart (Fabp3).